The chain runs to 164 residues: MFFASSLIFPFYILFVKNIGSSYTQFGFSYGLFGLSGALIYPLLGRLSERFDSRYFLLLNSWGMAVLLLYVPHIGSVVQVYIVQVLLGLFGAMQKHGEKVLIANFTDSGERGKKIGNYHFWTAVFSAAAIMLGGFLADFFTVQMIFYASSILYFLSGLMMMKTG.

Transmembrane regions (helical) follow at residues 25–45 (QFGFSYGLFGLSGALIYPLLG), 63–83 (GMAVLLLYVPHIGSVVQVYIV), 120–140 (FWTAVFSAAAIMLGGFLADFF), and 141–161 (TVQMIFYASSILYFLSGLMMM).

The protein belongs to the major facilitator superfamily.

The protein localises to the cell membrane. This is an uncharacterized protein from Bacillus subtilis (strain 168).